The primary structure comprises 87 residues: uncharacterized protein (87 aa).

This is an uncharacterized protein from Dictyostelium discoideum (Social amoeba).